The sequence spans 324 residues: MKKIGLLTSGGDCPGLNACIRAVVRTANYYNIEVVAFKRGFKGLIENDFTTLDYKSVAGILQKGGTILLTAREPRFKDYNFRKIAYENIQKHNIEALFVIGGNGSFQGAYLLQKDFGLNIIGIPKTIDNDIYGTDYAIGFDTAVNNAMEAIDKIKDTTMSHERIFIVEVMGRDNGFIALEVGIAVGAELTLIPEYPFPLHVIEETILKAKEMGKNFAIIVLAEGVASAKELSEILNERLKDKDVGEIRYQVLGYIQRGGSPSAYDRVMASKFGVFAVEKFVQGEKNFMVAYENGKLLTKPLEISFNKVRIPNLEEYQINNILSM.

Gly11 contacts ATP. 21-25 (RAVVR) serves as a coordination point for ADP. Residues 72-73 (RE) and 102-105 (GNGS) each bind ATP. Asn103 is a binding site for Mg(2+). Residue 126–128 (TID) coordinates substrate. The active-site Proton acceptor is Asp128. Lys155 serves as a coordination point for ADP. Substrate-binding positions include Arg163 and 170–172 (MGR). ADP-binding positions include 186 to 188 (GAE) and 214 to 216 (KNF). Substrate is bound by residues Glu223, Arg248, and 254–257 (YIQR).

It belongs to the phosphofructokinase type A (PFKA) family. ATP-dependent PFK group I subfamily. Prokaryotic clade 'B1' sub-subfamily. In terms of assembly, homotetramer. Requires Mg(2+) as cofactor.

The protein resides in the cytoplasm. The enzyme catalyses beta-D-fructose 6-phosphate + ATP = beta-D-fructose 1,6-bisphosphate + ADP + H(+). The protein operates within carbohydrate degradation; glycolysis; D-glyceraldehyde 3-phosphate and glycerone phosphate from D-glucose: step 3/4. Allosterically activated by ADP and other diphosphonucleosides, and allosterically inhibited by phosphoenolpyruvate. In terms of biological role, catalyzes the phosphorylation of D-fructose 6-phosphate to fructose 1,6-bisphosphate by ATP, the first committing step of glycolysis. This Sulfurihydrogenibium sp. (strain YO3AOP1) protein is ATP-dependent 6-phosphofructokinase.